The following is a 131-amino-acid chain: Classical arabinogalactan protein 1 (131 aa).

The first 22 residues, 1-22 (MAFSKSLVFVLLAALLISSAVA), serve as a signal peptide directing secretion. Residues 22–110 (AQSPAPAPSN…APGPAQGGAV (89 aa)) form a disordered region. The span at 50-60 (APAPEVSPSPS) shows a compositional bias: pro residues. The span at 61 to 72 (PAAALTPESSAS) shows a compositional bias: low complexity. Gly-108 is lipidated: GPI-anchor amidated glycine. Residues 109–131 (AVSNKFASFGSVAVMLTAAVLVI) constitute a propeptide, removed in mature form.

The protein belongs to the classical AGP family. Post-translationally, O-glycosylated on the hydroxyproline residues. As to expression, predominantly expressed in flowers and at a lower level in roots and leaves.

The protein localises to the cell membrane. In terms of biological role, proteoglycan that seems to be implicated in diverse developmental roles such as differentiation, cell-cell recognition, embryogenesis and programmed cell death. In Arabidopsis thaliana (Mouse-ear cress), this protein is Classical arabinogalactan protein 1 (AGP1).